A 513-amino-acid polypeptide reads, in one-letter code: ATP synthase subunit alpha (513 aa).

169–176 lines the ATP pocket; it reads GDRQTGKT.

The protein belongs to the ATPase alpha/beta chains family. In terms of assembly, F-type ATPases have 2 components, CF(1) - the catalytic core - and CF(0) - the membrane proton channel. CF(1) has five subunits: alpha(3), beta(3), gamma(1), delta(1), epsilon(1). CF(0) has three main subunits: a(1), b(2) and c(9-12). The alpha and beta chains form an alternating ring which encloses part of the gamma chain. CF(1) is attached to CF(0) by a central stalk formed by the gamma and epsilon chains, while a peripheral stalk is formed by the delta and b chains.

The protein resides in the cell inner membrane. It catalyses the reaction ATP + H2O + 4 H(+)(in) = ADP + phosphate + 5 H(+)(out). Its function is as follows. Produces ATP from ADP in the presence of a proton gradient across the membrane. The alpha chain is a regulatory subunit. The sequence is that of ATP synthase subunit alpha from Bordetella pertussis (strain Tohama I / ATCC BAA-589 / NCTC 13251).